The primary structure comprises 456 residues: B-cell linker protein (456 aa).

A disordered region spans residues 36-301 (IKKLKVKAPP…QSPVFPPAQK (266 aa)). Positions 57-74 (PADEEEQWSDDFDSDYEN) are enriched in acidic residues. Phosphotyrosine; by SYK is present on residues Tyr72, Tyr84, Tyr96, Tyr178, and Tyr189. Residues 173–187 (EDEADYVVPVEDNDE) show a composition bias toward acidic residues. Over residues 212–226 (PNSSTPASPPGTASG) the composition is skewed to low complexity. A compositionally biased stretch (pro residues) spans 236 to 245 (SPPPAAPSPL). Low complexity predominate over residues 251 to 260 (KPTTPLKTTP). The segment covering 271–289 (CEEKPIPAERHRGSSHRQE) has biased composition (basic and acidic residues). The region spanning 346–453 (WYAGACDRKS…KDSTRLKYAV (108 aa)) is the SH2 domain.

Associates with PLCG1, VAV1 and NCK1 in a B-cell antigen receptor-dependent fashion. Interacts with VAV3, PLCG2 and GRB2. Interacts through its SH2 domain with CD79A. Interacts (via SH2 domain) with SYK; phosphorylated and activated by SYK. Interacts (via SH2 domain) with SCIMP; this interaction is dependent on phosphorylation of SCIMP 'Tyr-131'. In terms of processing, following BCR activation, phosphorylated on tyrosine residues by SYK and LYN. When phosphorylated, serves as a scaffold to assemble downstream targets of antigen activation, including PLCG1, VAV1, GRB2 and NCK1. Phosphorylation of Tyr-84, Tyr-178 and Tyr-189 facilitates PLCG1 binding. Phosphorylation of Tyr-96 facilitates BTK binding. Phosphorylation of Tyr-72 facilitates VAV1 and NCK1 binding. Phosphorylation is required for both Ca(2+) and MAPK signaling pathways. Expressed in B-cell lineage and fibroblast cell lines (at protein level). Highest levels of expression in the spleen, with lower levels in the liver, kidney, pancreas, small intestines and colon.

The protein resides in the cytoplasm. It localises to the cell membrane. Functionally, functions as a central linker protein, downstream of the B-cell receptor (BCR), bridging the SYK kinase to a multitude of signaling pathways and regulating biological outcomes of B-cell function and development. Plays a role in the activation of ERK/EPHB2, MAP kinase p38 and JNK. Modulates AP1 activation. Important for the activation of NF-kappa-B and NFAT. Plays an important role in BCR-mediated PLCG1 and PLCG2 activation and Ca(2+) mobilization and is required for trafficking of the BCR to late endosomes. However, does not seem to be required for pre-BCR-mediated activation of MAP kinase and phosphatidyl-inositol 3 (PI3) kinase signaling. May be required for the RAC1-JNK pathway. Plays a critical role in orchestrating the pro-B cell to pre-B cell transition. May play an important role in BCR-induced B-cell apoptosis. The polypeptide is B-cell linker protein (BLNK) (Homo sapiens (Human)).